The following is a 582-amino-acid chain: DNA repair and recombination protein radC (582 aa).

A DNA-binding region spans residues 146–150; the sequence is KRALR. Over residues 194-204 the composition is skewed to basic and acidic residues; it reads KKEPMRVKPSL. Disordered stretches follow at residues 194–226, 310–400, and 485–582; these read KKEP…NSAA, QIPN…INGQ, and APSG…QHQH. Polar residues predominate over residues 326–335; sequence QNQYTNQRQS. Low complexity predominate over residues 516 to 529; the sequence is AAAQNNTAAANRMA.

The protein belongs to the RAD52 family. As to quaternary structure, part of a complex that includes RAD51, RAD52 and RAD59.

The protein localises to the nucleus. Its function is as follows. Involved in DNA double-strand break (DSB) repair and recombination. Promotes the annealing of complementary single-stranded DNA and by stimulation of the RAD51 recombinase. This chain is DNA repair and recombination protein radC (radC), found in Emericella nidulans (strain FGSC A4 / ATCC 38163 / CBS 112.46 / NRRL 194 / M139) (Aspergillus nidulans).